A 338-amino-acid chain; its full sequence is Ketol-acid reductoisomerase (NADP(+)) (338 aa).

Positions methionine 1–threonine 181 constitute a KARI N-terminal Rossmann domain. NADP(+) contacts are provided by residues tyrosine 24–glutamine 27, arginine 47, and serine 52. Histidine 107 is an active-site residue. Glycine 133 is an NADP(+) binding site. The region spanning aspartate 182–isoleucine 327 is the KARI C-terminal knotted domain. 4 residues coordinate Mg(2+): aspartate 190, glutamate 194, glutamate 226, and glutamate 230. A substrate-binding site is contributed by serine 251.

The protein belongs to the ketol-acid reductoisomerase family. It depends on Mg(2+) as a cofactor.

The catalysed reaction is (2R)-2,3-dihydroxy-3-methylbutanoate + NADP(+) = (2S)-2-acetolactate + NADPH + H(+). It catalyses the reaction (2R,3R)-2,3-dihydroxy-3-methylpentanoate + NADP(+) = (S)-2-ethyl-2-hydroxy-3-oxobutanoate + NADPH + H(+). It participates in amino-acid biosynthesis; L-isoleucine biosynthesis; L-isoleucine from 2-oxobutanoate: step 2/4. The protein operates within amino-acid biosynthesis; L-valine biosynthesis; L-valine from pyruvate: step 2/4. Functionally, involved in the biosynthesis of branched-chain amino acids (BCAA). Catalyzes an alkyl-migration followed by a ketol-acid reduction of (S)-2-acetolactate (S2AL) to yield (R)-2,3-dihydroxy-isovalerate. In the isomerase reaction, S2AL is rearranged via a Mg-dependent methyl migration to produce 3-hydroxy-3-methyl-2-ketobutyrate (HMKB). In the reductase reaction, this 2-ketoacid undergoes a metal-dependent reduction by NADPH to yield (R)-2,3-dihydroxy-isovalerate. This chain is Ketol-acid reductoisomerase (NADP(+)), found in Bordetella petrii (strain ATCC BAA-461 / DSM 12804 / CCUG 43448).